The sequence spans 156 residues: Homeobox-leucine zipper protein ATHB-52 (156 aa).

A DNA-binding region (homeobox) is located at residues 8–67 (GKNKKKRLTQDQVRQLEKCFTMNKKLEPDLKLQLSNQLGLPQRQVAVWFQNKRARFKTQS). The tract at residues 68-96 (LEVQHCTLQSKHEAALSDKAKLEHQVQFL) is leucine-zipper.

Belongs to the HD-ZIP homeobox family. Class I subfamily. As to expression, expressed in roots and flowers.

The protein resides in the nucleus. In terms of biological role, probable transcription factor. The protein is Homeobox-leucine zipper protein ATHB-52 (ATHB-52) of Arabidopsis thaliana (Mouse-ear cress).